The chain runs to 258 residues: Imidazole glycerol phosphate synthase subunit HisF (258 aa).

Residues D11 and D130 contribute to the active site.

This sequence belongs to the HisA/HisF family. In terms of assembly, heterodimer of HisH and HisF.

The protein localises to the cytoplasm. The catalysed reaction is 5-[(5-phospho-1-deoxy-D-ribulos-1-ylimino)methylamino]-1-(5-phospho-beta-D-ribosyl)imidazole-4-carboxamide + L-glutamine = D-erythro-1-(imidazol-4-yl)glycerol 3-phosphate + 5-amino-1-(5-phospho-beta-D-ribosyl)imidazole-4-carboxamide + L-glutamate + H(+). The protein operates within amino-acid biosynthesis; L-histidine biosynthesis; L-histidine from 5-phospho-alpha-D-ribose 1-diphosphate: step 5/9. Functionally, IGPS catalyzes the conversion of PRFAR and glutamine to IGP, AICAR and glutamate. The HisF subunit catalyzes the cyclization activity that produces IGP and AICAR from PRFAR using the ammonia provided by the HisH subunit. This Nitrobacter hamburgensis (strain DSM 10229 / NCIMB 13809 / X14) protein is Imidazole glycerol phosphate synthase subunit HisF.